A 421-amino-acid polypeptide reads, in one-letter code: MEKMHITNQEHDAFVKSHPNGDLLQLTKWAETKKLTGWYARRIAVGRDGEVQGVAQLLFKKVPKLPYTLCYISRGFVVDYSNKEALNALLDSAKEIAKAEKAYAIKIDPDVEVDKGTDALQNLKALGFKHKGFKEGLSKDYIQPRMTMITPIDKNDDELLNSFERRNRSKVRLALKRGTTVERSDREGLKTFAELMKITGERDGFLTRDISYFENIYDALHEDGDAELFLVKLDPKENIAKVNQELNELHAEIAKWQQKMETSEKQAKKAQNMINDAQNKIAKNEDLKRDLEALEKEHPEGIYLSGALLMFAGSKSYYLYGASSNEFRDFLPNHHMQYTMMKYAREHGATTYDFGGTDNDPDKDSEHYGLWAFKKVWGTYLSEKIGEFDYILNQPLYQLIEQVKPRLTKAKIKISRKLKRK.

Belongs to the FemABX family. Monomer.

It localises to the cytoplasm. It catalyses the reaction beta-D-GlcNAc-(1-&gt;4)-Mur2Ac(oyl-L-Ala-D-isoglutaminyl-L-Lys-D-Ala-D-Ala)-di-trans,octa-cis-undecaprenyl diphosphate + glycyl-tRNA(Gly) = beta-D-GlcNAc-(1-&gt;4)-Mur2Ac(oyl-L-Ala-D-isoglutaminyl-L-Lys-(N(6)-Gly)-D-Ala-D-Ala)-di-trans,octa-cis-undecaprenyl diphosphate + tRNA(Gly) + H(+). Its function is as follows. Catalyzes the incorporation of the first glycine of the pentaglycine interpeptide bridge, which is characteristic of the S.aureus peptidoglycan. This glycine is added to the epsilon-amino group of the L-lysine of the membrane-bound lipid II intermediate (GlcNAc-(beta-1,4)-N-acetylmuramic acid(-L-Ala-D-iGln-L-Lys-D-Ala-D-Ala)-pyrophosphoryl-undecaprenol), using glycyl-tRNA(Gly) as donor, in a ribosome-independent mechanism. Involved in methicillin resistance. This chain is Lipid II:glycine glycyltransferase (femX), found in Staphylococcus aureus (strain Mu50 / ATCC 700699).